Here is a 449-residue protein sequence, read N- to C-terminus: Trigger factor (449 aa).

The PPIase FKBP-type domain occupies 173–258; sequence GDRVTVDFVG…MKKVEWPHLP (86 aa).

This sequence belongs to the FKBP-type PPIase family. Tig subfamily.

The protein localises to the cytoplasm. The catalysed reaction is [protein]-peptidylproline (omega=180) = [protein]-peptidylproline (omega=0). Its function is as follows. Involved in protein export. Acts as a chaperone by maintaining the newly synthesized protein in an open conformation. Functions as a peptidyl-prolyl cis-trans isomerase. In Burkholderia thailandensis (strain ATCC 700388 / DSM 13276 / CCUG 48851 / CIP 106301 / E264), this protein is Trigger factor.